The chain runs to 85 residues: U4-theraphotoxin-Hhn1a (85 aa).

Positions 1-22 (MKMTLIAILTCAAVLVLHTTAA) are cleaved as a signal peptide. The propeptide occupies 23–48 (EELEAESQLMEVGMPDTELAAVDEER). 3 disulfides stabilise this stretch: C52–C66, C56–C77, and C71–C82.

The protein belongs to the neurotoxin 12 (Hwtx-2) family. 02 (Hwtx-2) subfamily. In terms of assembly, monomer. In terms of tissue distribution, expressed by the venom gland.

The protein resides in the secreted. Its function is as follows. Neurotoxin active on both insects and mammals. This Cyriopagopus hainanus (Chinese bird spider) protein is U4-theraphotoxin-Hhn1a.